The sequence spans 142 residues: Transcription antitermination protein NusB (142 aa).

It belongs to the NusB family.

Involved in transcription antitermination. Required for transcription of ribosomal RNA (rRNA) genes. Binds specifically to the boxA antiterminator sequence of the ribosomal RNA (rrn) operons. The chain is Transcription antitermination protein NusB from Thermotoga sp. (strain RQ2).